Here is a 324-residue protein sequence, read N- to C-terminus: UDP-N-acetylenolpyruvoylglucosamine reductase (324 aa).

The 194-residue stretch at 38-231 (AGGSARRLYV…SRERIRSLLK (194 aa)) folds into the FAD-binding PCMH-type domain. The active site involves arginine 195. Residue serine 246 is the Proton donor of the active site. Glutamate 316 is a catalytic residue.

Belongs to the MurB family. FAD is required as a cofactor.

It localises to the cytoplasm. It carries out the reaction UDP-N-acetyl-alpha-D-muramate + NADP(+) = UDP-N-acetyl-3-O-(1-carboxyvinyl)-alpha-D-glucosamine + NADPH + H(+). Its pathway is cell wall biogenesis; peptidoglycan biosynthesis. In terms of biological role, cell wall formation. This is UDP-N-acetylenolpyruvoylglucosamine reductase from Thiobacillus denitrificans (strain ATCC 25259 / T1).